A 578-amino-acid polypeptide reads, in one-letter code: MDISDISASQLATSPPPITTIDFNSSIEESPAKRVKFAPELTKSFEETLSPTVTLVLRNNEETFDRCLLSFYSNYFRVLFSSKFRDSKSTTHRIRLISAPDLHLLLTIPKAFEQGIKPNISLQKAVELLEPSAFLQMSIPLDYITDVICANLTHENIIKIFRLALLYHTTLAVRVWRAMVRKFQTLFATNVYLTLKENELIGLLTDKHLNLKSADEKTVVVNWIKHNSPLQSDRMAQFAQRNFSRQPQPDATKYEVIRTRQPMDAIVCFGGWASRGVAQNIEVFNTRSDRWQTCNFNYDIPNIRRAYHGIEVVEDKLIVYGGFNGTQQFQTTVLFDLSTKEWRSGANMNDKRCYVTSARINDSHGRPLIFACGGMNGVSRLKTAEMYDYRADQWSEVANMAQMRSDGAVVTIDNKIVVIGGFDGRNIHQGGEVYDPVLDLWHPLSSNMRTRRTGCTAVSIMNQVCMIIGGFNGNRRLDSAEIYDMREGLWHPVPSLHTARSNFSACQMDTCSIYVAGGFDGQATTKESERLDLRSKMWQALPDMSEAKSALRMVTLSDHPFLDELFDIPDDTGIITTW.

A BTB domain is found at 51–118; the sequence is PTVTLVLRNN…PKAFEQGIKP (68 aa). The BACK domain occupies 158–236; sequence IKIFRLALLY…NSPLQSDRMA (79 aa). Kelch repeat units lie at residues 265-315, 316-362, 368-414, 416-462, 464-510, and 512-558; these read AIVC…VVED, KLIV…RIND, LIFA…TIDN, IVVI…SIMN, VCMI…QMDT, and SIYV…TLSD.

The protein is Kelch repeat-containing protein kel-10 of Caenorhabditis elegans.